The sequence spans 84 residues: RQC P-site tRNA stabilizing factor (84 aa).

Positions 1 to 64 (MRIDKFLQSV…IEEYTILQIP (64 aa)) constitute an S4 RNA-binding domain.

Belongs to the RqcP family. In terms of assembly, associates with stalled 50S ribosomal subunits. Binds to RqcH, 23S rRNA and the P-site tRNA. Does not require RqcH for association with 50S subunits.

In terms of biological role, key component of the ribosome quality control system (RQC), a ribosome-associated complex that mediates the extraction of incompletely synthesized nascent chains from stalled ribosomes and their subsequent degradation. RqcH recruits Ala-charged tRNA, and with RqcP directs the elongation of stalled nascent chains on 50S ribosomal subunits, leading to non-templated C-terminal alanine extensions (Ala tail). The Ala tail promotes nascent chain degradation. RqcP is associated with the translocation-like movement of the peptidyl-tRNA from the A-site into the P-site. The polypeptide is RQC P-site tRNA stabilizing factor (Helicobacter pylori (strain ATCC 700392 / 26695) (Campylobacter pylori)).